The primary structure comprises 336 residues: GTPase Obg (336 aa).

In terms of domain architecture, Obg spans 1-159 (MKFVDSATVF…LELAMELKLM (159 aa)). The tract at residues 120–143 (GGHGGRGNQHFATSTNQAPRRSEP) is disordered. Over residues 129-138 (HFATSTNQAP) the composition is skewed to polar residues. The region spanning 160–323 (ADVGLVGFPN…LKDELWRQVS (164 aa)) is the OBG-type G domain. GTP-binding positions include 166–173 (GFPNAGKS), 191–195 (FTTLV), 213–216 (DIPG), 280–283 (TKMD), and 304–306 (SSV). The Mg(2+) site is built by Ser173 and Thr193.

This sequence belongs to the TRAFAC class OBG-HflX-like GTPase superfamily. OBG GTPase family. In terms of assembly, monomer. Mg(2+) serves as cofactor.

The protein localises to the cytoplasm. Its function is as follows. An essential GTPase which binds GTP, GDP and possibly (p)ppGpp with moderate affinity, with high nucleotide exchange rates and a fairly low GTP hydrolysis rate. Plays a role in control of the cell cycle, stress response, ribosome biogenesis and in those bacteria that undergo differentiation, in morphogenesis control. The polypeptide is GTPase Obg (Chlorobium phaeovibrioides (strain DSM 265 / 1930) (Prosthecochloris vibrioformis (strain DSM 265))).